Reading from the N-terminus, the 314-residue chain is UDP-N-acetylenolpyruvoylglucosamine reductase (314 aa).

The region spanning 31–208 is the FAD-binding PCMH-type domain; the sequence is RIGGPADYYA…LSARFRLTPK (178 aa). Arg187 is an active-site residue. Residue Ser237 is the Proton donor of the active site. The active site involves Glu307.

Belongs to the MurB family. FAD is required as a cofactor.

Its subcellular location is the cytoplasm. It carries out the reaction UDP-N-acetyl-alpha-D-muramate + NADP(+) = UDP-N-acetyl-3-O-(1-carboxyvinyl)-alpha-D-glucosamine + NADPH + H(+). It participates in cell wall biogenesis; peptidoglycan biosynthesis. Functionally, cell wall formation. The polypeptide is UDP-N-acetylenolpyruvoylglucosamine reductase (Agathobacter rectalis (strain ATCC 33656 / DSM 3377 / JCM 17463 / KCTC 5835 / VPI 0990) (Eubacterium rectale)).